A 489-amino-acid polypeptide reads, in one-letter code: Neuropeptide CCHamide-2 receptor (489 aa).

Topologically, residues 1 to 74 (MYASLMDVGQ…DRPETYIVTV (74 aa)) are extracellular. Asn-25 and Asn-50 each carry an N-linked (GlcNAc...) asparagine glycan. A helical transmembrane segment spans residues 75-95 (LYTLIFIVGVLGNGTLVIIFF). Topologically, residues 96 to 107 (RHRSMRNIPNTY) are cytoplasmic. A helical transmembrane segment spans residues 108-128 (ILSLALADLLVILVCVPVATI). The Extracellular portion of the chain corresponds to 129–143 (VYTQESWPFERNMCR). Cys-142 and Cys-225 are joined by a disulfide. The helical transmembrane segment at 144–164 (ISEFFKDISIGVSVFTLTALS) threads the bilayer. Over 165–184 (GERYCAIVNPLRKLQTKPLT) the chain is Cytoplasmic. The helical transmembrane segment at 185 to 205 (VFTAVMIWILAILLGMPSVLF) threads the bilayer. At 206-235 (SDIKSYPVFTATGNMTIEVCSPFRDPEYAK) the chain is on the extracellular side. N-linked (GlcNAc...) asparagine glycosylation is present at Asn-219. Residues 236-256 (FMVAGKALVYYLLPLSIIGAL) traverse the membrane as a helical segment. The Cytoplasmic portion of the chain corresponds to 257 to 293 (YIMMAKRLHMSARNMPGEQQSMQSRTQARARLHVARM). The helical transmembrane segment at 294–314 (VVAFVVVFFICFFPYHVFELW) threads the bilayer. The Extracellular segment spans residues 315 to 333 (YHFYPTAEEDFDEFWNVLR). The helical transmembrane segment at 334 to 354 (IVGFCTSFLNSCVNPVALYCV) threads the bilayer. At 355 to 489 (SGVFRQHFNR…NRYESGVMRY (135 aa)) the chain is on the cytoplasmic side. Residues 438 to 468 (SFHRQDSMPLQHGNAHGGGAGGGSSGLGAGG) are disordered. The segment covering 452 to 468 (AHGGGAGGGSSGLGAGG) has biased composition (gly residues).

This sequence belongs to the G-protein coupled receptor 1 family. Highly expressed in larval brain. Also highly expressed in adult brain with very low levels in larval and adult gut.

It is found in the cell membrane. Functionally, receptor for the neuropeptide CCHamide-2. In Drosophila melanogaster (Fruit fly), this protein is Neuropeptide CCHamide-2 receptor.